We begin with the raw amino-acid sequence, 100 residues long: Urease subunit gamma (100 aa).

This sequence belongs to the urease gamma subunit family. In terms of assembly, heterotrimer of UreA (gamma), UreB (beta) and UreC (alpha) subunits. Three heterotrimers associate to form the active enzyme.

It is found in the cytoplasm. The catalysed reaction is urea + 2 H2O + H(+) = hydrogencarbonate + 2 NH4(+). The protein operates within nitrogen metabolism; urea degradation; CO(2) and NH(3) from urea (urease route): step 1/1. This Hahella chejuensis (strain KCTC 2396) protein is Urease subunit gamma.